We begin with the raw amino-acid sequence, 382 residues long: MLLVTNDFPPRRGGIQSYLEAFVGELVRTHELTVYAPKWKGAEEYDEKAARSGYRVVRHPTTLMLPEPTVASRMKRLIGEHDIETVWFGAAAPLALLGPLARRAGARRIVASTHGHEVGWSMLPVARTALRRIGNDADVVTFVSRYTRSRFASAFGPSAALEHLPPGVDTDRFAPDPDARARMRERYGLGDRPVVVCLSRLVPRKGQDMLIRALPELRRRVPDTALAIVGGGPYLETLQRMASDLGVAEHVVFTRGIPAEELPAHHAMADVFAMPCRTRGAGLDVEGLGIVYLEASACGVPVVAGRSGGAPETVLDGKTGTVVDGTDVDAITTAVGDLLADPRRAAAMGVAGRHWALDNWQWRTRGARLAELLSGRREARQA.

The GDP-alpha-D-mannose site is built by arginine 200, lysine 205, isoleucine 257, and glutamate 294.

The protein belongs to the glycosyltransferase group 1 family. Glycosyltransferase 4 subfamily.

The catalysed reaction is a 1,2-diacyl-sn-glycero-3-phospho-[alpha-D-mannopyranosyl-(1&lt;-&gt;6)-D-myo-inositol] + GDP-alpha-D-mannose = a 2,6-O-bis(alpha-D-mannopyranosyl)-1-phosphatidyl-1D-myo-inositol + GDP + H(+). The enzyme catalyses a 1,2-diacyl-sn-glycero-3-phospho-[alpha-D-6-acyl-mannopyranosyl-(1&lt;-&gt;6)-D-myo-inositol] + GDP-alpha-D-mannose = a 2-O-(alpha-D-mannosyl)-6-O-(6-O-acyl-alpha-D-mannosyl)-1-phosphatidyl-1D-myo-inositol + GDP + H(+). It functions in the pathway phospholipid metabolism; phosphatidylinositol metabolism. Functionally, involved in the biosynthesis of phosphatidyl-myo-inositol mannosides (PIM) which are early precursors in the biosynthesis of lipomannans (LM) and lipoarabinomannans (LAM). Catalyzes the addition of a mannosyl residue from GDP-D-mannose (GDP-Man) to the position 6 of a phosphatidyl-myo-inositol bearing an alpha-1,2-linked mannose residue (PIM1) to generate phosphatidyl-myo-inositol bearing alpha-1,2- and alpha-1,6-linked mannose residues (Ac1PIM2). PimB also catalyzes the addition of a mannosyl residue from GDP-Man to the position 6 of phosphatidyl-myo-inositol bearing an acylated alpha-1,2-linked mannose residue (Ac1PIM1) to generate monoacylated phosphatidyl-myo-inositol bearing alpha-1,2- and alpha-1,6-linked mannose residues (Ac1PIM2). The addition of the second mannosyl residue by PimB preferentially occurs before the acylation of the mannosyl residue transferred by PimA. Also able to transfer a mannosyl residue from GDP-Man to the position 6 of a phosphatidyl-myo-inositol (PI), but this reaction is very slow. The sequence is that of GDP-mannose-dependent alpha-(1-6)-phosphatidylinositol monomannoside mannosyltransferase from Mycolicibacterium smegmatis (strain ATCC 700084 / mc(2)155) (Mycobacterium smegmatis).